Reading from the N-terminus, the 383-residue chain is Cytochrome b (383 aa).

Transmembrane regions (helical) follow at residues 34–54 (FGSL…FLMM), 78–99 (WLIR…FLHI), 114–134 (WNVG…GYVL), and 179–199 (FTAL…THLI). Positions 84 and 98 each coordinate heme b. Positions 183 and 197 each coordinate heme b. His202 contacts a ubiquinone. A run of 4 helical transmembrane segments spans residues 227 to 247 (MKDV…ALYL), 289 to 309 (LGGV…PFLH), 321 to 341 (LSQL…WIGG), and 348 to 368 (YILL…ILMP).

This sequence belongs to the cytochrome b family. The cytochrome bc1 complex contains 3 respiratory subunits (MT-CYB, CYC1 and UQCRFS1), 2 core proteins (UQCRC1 and UQCRC2) and probably 6 low-molecular weight proteins. Requires heme b as cofactor.

Its subcellular location is the mitochondrion inner membrane. In terms of biological role, component of the ubiquinol-cytochrome c reductase complex (complex III or cytochrome b-c1 complex) that is part of the mitochondrial respiratory chain. The b-c1 complex mediates electron transfer from ubiquinol to cytochrome c. Contributes to the generation of a proton gradient across the mitochondrial membrane that is then used for ATP synthesis. This chain is Cytochrome b (MT-CYB), found in Caiman crocodilus (Spectacled caiman).